The chain runs to 150 residues: Myosin, essential light chain (150 aa).

2 EF-hand domains span residues 3-38 (ASAD…LGKS) and 75-110 (EQQK…LGDY). Aspartate 16, aspartate 18, aspartate 20, lysine 22, and aspartate 27 together coordinate Ca(2+).

As to quaternary structure, myosin is a hexamer of 2 heavy chains and 4 light chains (two regulatory light chains and two essential light chains).

This chain is Myosin, essential light chain (mlcE), found in Dictyostelium discoideum (Social amoeba).